The following is a 283-amino-acid chain: Digeranylgeranylglyceryl phosphate synthase (283 aa).

A run of 8 helical transmembrane segments spans residues I21–I41, L45–F65, L97–I117, I135–G155, V158–V178, L204–L224, I226–M246, and V261–I281.

The protein belongs to the UbiA prenyltransferase family. DGGGP synthase subfamily. The cofactor is Mg(2+).

The protein resides in the cell membrane. The enzyme catalyses sn-3-O-(geranylgeranyl)glycerol 1-phosphate + (2E,6E,10E)-geranylgeranyl diphosphate = 2,3-bis-O-(geranylgeranyl)-sn-glycerol 1-phosphate + diphosphate. The protein operates within membrane lipid metabolism; glycerophospholipid metabolism. Functionally, prenyltransferase that catalyzes the transfer of the geranylgeranyl moiety of geranylgeranyl diphosphate (GGPP) to the C2 hydroxyl of (S)-3-O-geranylgeranylglyceryl phosphate (GGGP). This reaction is the second ether-bond-formation step in the biosynthesis of archaeal membrane lipids. This chain is Digeranylgeranylglyceryl phosphate synthase, found in Methanocaldococcus jannaschii (strain ATCC 43067 / DSM 2661 / JAL-1 / JCM 10045 / NBRC 100440) (Methanococcus jannaschii).